Consider the following 82-residue polypeptide: Small ribosomal subunit protein bS16 (82 aa).

This sequence belongs to the bacterial ribosomal protein bS16 family.

The protein is Small ribosomal subunit protein bS16 of Francisella tularensis subsp. tularensis (strain FSC 198).